The following is a 117-amino-acid chain: Large ribosomal subunit protein bL20 (117 aa).

The protein belongs to the bacterial ribosomal protein bL20 family.

In terms of biological role, binds directly to 23S ribosomal RNA and is necessary for the in vitro assembly process of the 50S ribosomal subunit. It is not involved in the protein synthesizing functions of that subunit. This Campylobacter fetus subsp. fetus (strain 82-40) protein is Large ribosomal subunit protein bL20.